The primary structure comprises 462 residues: MDKLTFPIFPAADLVNFFRQNILTGTEAKNFNKNDLYPNPKPEMVQKLYMRILQQVFSYGVEQFYMVPMDLDIQYPHLVEGFAPVANILKLMARLLPMCRVYDFHPSDVLNPKGKRTLHLLSGIFNFLQFRTTQREVYMEYCSGYKSALENVRQLQKTNHEAEIKIEKLTTVPPEQQAEFKALSSEIHDLQQIISQEYRAKDVMFQEKIAQRKAEFAEKNKRLNEQKLTIATMKEEQERMKSQIVESPEQRKSKTERMKETVHRLKQARQETSDKCDHYRDRVALAFMWQSDVQGYLKKLQNIDANLEIHRKIHEEIRHIEEQLMNLNLELKSLSNEDAQLKRIILVKKEKLAKVDIKNKKKQEDFNQQKQEILEVCSHIQEKRQVIHGRVAQVLQEIQQTISKKEQLLETTEAGKNKCQEVITDFRAALEKYHDSLQKASERSADRRREKIAELNRRLSRQ.

A coiled-coil region spans residues S143–Q462. The disordered stretch occupies residues E236–K259. The span at P248 to K259 shows a compositional bias: basic and acidic residues.

This sequence belongs to the NUF2 family. Component of the NDC80 complex, which is composed of ndc80, cdca1, spbc24 and spbc25. The NDC80 complex interacts with mis12 and zwint.

Its subcellular location is the nucleus. The protein resides in the chromosome. It is found in the centromere. The protein localises to the kinetochore. In terms of biological role, acts as a component of the essential kinetochore-associated NDC80 complex, which is required for chromosome segregation and spindle checkpoint activity. Required for kinetochore integrity and the organization of stable microtubule binding sites in the outer plate of the kinetochore. The NDC80 complex synergistically enhances the affinity of the SKA1 complex for microtubules and may allow the NDC80 complex to track depolymerizing microtubules. This Xenopus laevis (African clawed frog) protein is Kinetochore protein Nuf2-B (nuf2-b).